A 222-amino-acid chain; its full sequence is Cytochrome b6 (222 aa).

The chain crosses the membrane as a helical span at residues 39-59 (IFYCLGGITLTCFIIQFATGF). Residue cysteine 42 coordinates heme c. Histidine 93 and histidine 107 together coordinate heme b. 3 helical membrane-spanning segments follow: residues 97–117 (ASMM…TGGF), 123–143 (LTWI…VTGY), and 193–213 (LHTF…FLMI). Residues histidine 194 and histidine 209 each coordinate heme b.

It belongs to the cytochrome b family. PetB subfamily. The 4 large subunits of the cytochrome b6-f complex are cytochrome b6, subunit IV (17 kDa polypeptide, PetD), cytochrome f and the Rieske protein, while the 4 small subunits are PetG, PetL, PetM and PetN. The complex functions as a dimer. The cofactor is heme b. Requires heme c as cofactor.

Its subcellular location is the cellular thylakoid membrane. Component of the cytochrome b6-f complex, which mediates electron transfer between photosystem II (PSII) and photosystem I (PSI), cyclic electron flow around PSI, and state transitions. The protein is Cytochrome b6 (petB) of Picosynechococcus sp. (strain ATCC 27264 / PCC 7002 / PR-6) (Agmenellum quadruplicatum).